The chain runs to 184 residues: Ribosome-recycling factor (184 aa).

The protein belongs to the RRF family.

It localises to the cytoplasm. Its function is as follows. Responsible for the release of ribosomes from messenger RNA at the termination of protein biosynthesis. May increase the efficiency of translation by recycling ribosomes from one round of translation to another. This Borrelia garinii subsp. bavariensis (strain ATCC BAA-2496 / DSM 23469 / PBi) (Borreliella bavariensis) protein is Ribosome-recycling factor.